Reading from the N-terminus, the 516-residue chain is GMP synthase [glutamine-hydrolyzing] (516 aa).

Positions 6-198 (KVIIVDYGSQ…LFKIAGIKAD (193 aa)) constitute a Glutamine amidotransferase type-1 domain. The active-site Nucleophile is cysteine 83. Catalysis depends on residues histidine 172 and glutamate 174. Positions 199–391 (WSMSSFCERV…LGLPDFIVWR (193 aa)) constitute a GMPS ATP-PPase domain. Residue 227-233 (SGGIDST) participates in ATP binding.

Homodimer.

It catalyses the reaction XMP + L-glutamine + ATP + H2O = GMP + L-glutamate + AMP + diphosphate + 2 H(+). It functions in the pathway purine metabolism; GMP biosynthesis; GMP from XMP (L-Gln route): step 1/1. Functionally, catalyzes the synthesis of GMP from XMP. This chain is GMP synthase [glutamine-hydrolyzing], found in Oleidesulfovibrio alaskensis (strain ATCC BAA-1058 / DSM 17464 / G20) (Desulfovibrio alaskensis).